A 406-amino-acid chain; its full sequence is Kelch domain-containing protein 2 (406 aa).

Kelch repeat units lie at residues 31 to 85 (ERSG…NTEG), 92 to 136 (SGSC…ERID), 148 to 207 (LGVW…IWSQ), 221 to 259 (HACA…NELI), 271 to 311 (HSLT…IKFN), and 322 to 359 (HTAC…IFSV).

Component of a CRL2(KLHDC2) E3 ubiquitin-protein ligase complex, also named ECS(KLHDC2) complex, composed of CUL2, Elongin BC (ELOB and ELOC), RBX1 and substrate-specific adapter KLHDC2. May form oligomers as a KLHDC2-ELOB-ELOC complex; this interaction is autoinhibitory for the E3 ligase complex as the substrate-binding site of KLHDC2 is blocked in the oligomer. Interacts with CREB3; interaction is direct and specific as it does not interact with CREB1, ATF4, ATF6, JUN, FOS, CEBPA or herpes simplex virus transactivator VP16. In terms of processing, autoubiquitinated by the CRL2(KLHDC2) E3 ligase complex.

The protein localises to the nucleus. Its pathway is protein modification; protein ubiquitination. Functionally, substrate-recognition component of a Cul2-RING (CRL2) E3 ubiquitin-protein ligase complex of the DesCEND (destruction via C-end degrons) pathway, which recognizes a C-degron located at the extreme C terminus of target proteins, leading to their ubiquitination and degradation. The C-degron recognized by the DesCEND pathway is usually a motif of less than ten residues and can be present in full-length proteins, truncated proteins or proteolytically cleaved forms. The CRL2(KLHDC2) complex specifically recognizes proteins with a diglycine (Gly-Gly) at the C-terminus, leading to their ubiquitination and degradation. The CRL2(KLHDC2) complex mediates ubiquitination and degradation of truncated SELENOK and SELENOS selenoproteins produced by failed UGA/Sec decoding, which end with a diglycine. The CRL2(KLHDC2) complex also recognizes proteolytically cleaved proteins ending with Gly-Gly, such as the N-terminal fragment of USP1, leading to their degradation. May also act as an indirect repressor of CREB3-mediated transcription by interfering with CREB3-DNA-binding. This is Kelch domain-containing protein 2 from Bos taurus (Bovine).